The primary structure comprises 351 residues: Type II restriction enzyme NmeDI (351 aa).

It catalyses the reaction Endonucleolytic cleavage of DNA to give specific double-stranded fragments with terminal 5'-phosphates.. A P subtype restriction enzyme that recognizes the double-stranded sequence 5'-N(12)RCCGGYN(12)-3' and cleaves on both sides of the recognition sequence. The polypeptide is Type II restriction enzyme NmeDI (nmeDIRP) (Neisseria meningitidis serogroup C).